Consider the following 164-residue polypeptide: Crossover junction endodeoxyribonuclease RuvC (164 aa).

Residues Asp7, Glu67, and Asp140 contribute to the active site. Residues Asp7, Glu67, and Asp140 each contribute to the Mg(2+) site.

Belongs to the RuvC family. Homodimer which binds Holliday junction (HJ) DNA. The HJ becomes 2-fold symmetrical on binding to RuvC with unstacked arms; it has a different conformation from HJ DNA in complex with RuvA. In the full resolvosome a probable DNA-RuvA(4)-RuvB(12)-RuvC(2) complex forms which resolves the HJ. It depends on Mg(2+) as a cofactor.

It localises to the cytoplasm. It catalyses the reaction Endonucleolytic cleavage at a junction such as a reciprocal single-stranded crossover between two homologous DNA duplexes (Holliday junction).. The RuvA-RuvB-RuvC complex processes Holliday junction (HJ) DNA during genetic recombination and DNA repair. Endonuclease that resolves HJ intermediates. Cleaves cruciform DNA by making single-stranded nicks across the HJ at symmetrical positions within the homologous arms, yielding a 5'-phosphate and a 3'-hydroxyl group; requires a central core of homology in the junction. The consensus cleavage sequence is 5'-(A/T)TT(C/G)-3'. Cleavage occurs on the 3'-side of the TT dinucleotide at the point of strand exchange. HJ branch migration catalyzed by RuvA-RuvB allows RuvC to scan DNA until it finds its consensus sequence, where it cleaves and resolves the cruciform DNA. The polypeptide is Crossover junction endodeoxyribonuclease RuvC (Alkaliphilus oremlandii (strain OhILAs) (Clostridium oremlandii (strain OhILAs))).